The following is a 353-amino-acid chain: Protein MGF 360-11L (353 aa).

The protein belongs to the asfivirus MGF 360 family. In terms of assembly, interacts with host TBK1 ad IRF7.

Plays a role in virus cell tropism, and may be required for efficient virus replication in macrophages. In addition, inhibits the phosphorylation of host TBK1 and IRF7 and thereby negatively regulates the host cGAS signaling pathway and antagonizes IFN-mediated antiviral activity. In African swine fever virus (isolate Tick/South Africa/Pretoriuskop Pr4/1996) (ASFV), this protein is Protein MGF 360-11L.